The chain runs to 659 residues: UDP-glucuronate:xylan alpha-glucuronosyltransferase 1 (659 aa).

Residues M1–T14 are compositionally biased toward low complexity. Residues M1 to R20 are disordered. A helical; Signal-anchor for type II membrane protein transmembrane segment spans residues F70 to Y90. Positions 416 and 418 each coordinate Mn(2+). Substrate is bound by residues D416–D418, N445–G447, N472–Q476, and H526–K531. Residue H526 coordinates Mn(2+).

It belongs to the glycosyltransferase 8 family. Glycogenin subfamily. The cofactor is Mn(2+).

Its subcellular location is the golgi apparatus membrane. Functionally, glycosyltransferase required for the addition of both glucuronic acid and 4-O-methylglucuronic acid branches to xylan in stem cell walls. In association with GUX2, is responsible for almost all of the substitutions of the xylan backbone in stem glucuronoxylan. In Arabidopsis thaliana (Mouse-ear cress), this protein is UDP-glucuronate:xylan alpha-glucuronosyltransferase 1 (GUX1).